Reading from the N-terminus, the 231-residue chain is Endonuclease NucS (231 aa).

It belongs to the NucS endonuclease family.

It localises to the cytoplasm. Its function is as follows. Cleaves both 3' and 5' ssDNA extremities of branched DNA structures. This Pseudarthrobacter chlorophenolicus (strain ATCC 700700 / DSM 12829 / CIP 107037 / JCM 12360 / KCTC 9906 / NCIMB 13794 / A6) (Arthrobacter chlorophenolicus) protein is Endonuclease NucS.